A 191-amino-acid chain; its full sequence is ATP synthase subunit b 2 (191 aa).

Basic and acidic residues predominate over residues 1–12 (MAESHGEAKGGE). Residues 1-31 (MAESHGEAKGGEAKGTASAHTEAEGGHGFPP) form a disordered region. Residues 38-60 (PSQIASLVIAFVALYVIVSRVAL) traverse the membrane as a helical segment.

Belongs to the ATPase B chain family. In terms of assembly, F-type ATPases have 2 components, F(1) - the catalytic core - and F(0) - the membrane proton channel. F(1) has five subunits: alpha(3), beta(3), gamma(1), delta(1), epsilon(1). F(0) has three main subunits: a(1), b(2) and c(10-14). The alpha and beta chains form an alternating ring which encloses part of the gamma chain. F(1) is attached to F(0) by a central stalk formed by the gamma and epsilon chains, while a peripheral stalk is formed by the delta and b chains.

The protein localises to the cell inner membrane. Functionally, f(1)F(0) ATP synthase produces ATP from ADP in the presence of a proton or sodium gradient. F-type ATPases consist of two structural domains, F(1) containing the extramembraneous catalytic core and F(0) containing the membrane proton channel, linked together by a central stalk and a peripheral stalk. During catalysis, ATP synthesis in the catalytic domain of F(1) is coupled via a rotary mechanism of the central stalk subunits to proton translocation. In terms of biological role, component of the F(0) channel, it forms part of the peripheral stalk, linking F(1) to F(0). The b'-subunit is a diverged and duplicated form of b found in plants and photosynthetic bacteria. The sequence is that of ATP synthase subunit b 2 (atpF2) from Bradyrhizobium sp. (strain ORS 278).